The following is a 90-amino-acid chain: Small ribosomal subunit protein bS16 (90 aa).

Belongs to the bacterial ribosomal protein bS16 family.

The protein is Small ribosomal subunit protein bS16 of Heliobacterium modesticaldum (strain ATCC 51547 / Ice1).